We begin with the raw amino-acid sequence, 630 residues long: Threonine--tRNA ligase (630 aa).

Positions 1-137 (MKVLLIHSDY…PLSELSRKIT (137 aa)) are editing domain. The segment at 207-506 (PHVKFITEKE…ADAGAPPMLP (300 aa)) is catalytic. The Zn(2+) site is built by Cys299, His351, and His475.

The protein belongs to the class-II aminoacyl-tRNA synthetase family. Homodimer. The cofactor is Zn(2+).

It localises to the cytoplasm. It catalyses the reaction tRNA(Thr) + L-threonine + ATP = L-threonyl-tRNA(Thr) + AMP + diphosphate + H(+). In terms of biological role, catalyzes the attachment of threonine to tRNA(Thr) in a two-step reaction: L-threonine is first activated by ATP to form Thr-AMP and then transferred to the acceptor end of tRNA(Thr). Also edits incorrectly charged L-seryl-tRNA(Thr). This is Threonine--tRNA ligase from Methanococcus aeolicus (strain ATCC BAA-1280 / DSM 17508 / OCM 812 / Nankai-3).